The following is a 510-amino-acid chain: Dentin matrix acidic phosphoprotein 1 (510 aa).

Positions 1–16 (MKTTILLMFLWGLSCA) are cleaved as a signal peptide. The segment at 23-510 (QNTESKSSEE…QDDNDCQDGY (488 aa)) is disordered. Composition is skewed to acidic residues over residues 61–77 (QANE…EVLG) and 101–119 (NKDD…DDDG). Composition is skewed to basic and acidic residues over residues 123–180 (PEER…RPEG), 273–288 (RLPE…DSRT), and 299–328 (PDSK…RSPE). Residues 333–343 (VQDPSSESSQE) are compositionally biased toward polar residues. N-linked (GlcNAc...) asparagine glycosylation is present at Asn351. Over residues 358–367 (EALHESRGDN) the composition is skewed to basic and acidic residues. Positions 364-366 (RGD) match the Cell attachment site motif. Asn370 carries N-linked (GlcNAc...) asparagine glycosylation. A compositionally biased stretch (basic and acidic residues) spans 407–417 (SESHESLRSSE). 2 N-linked (GlcNAc...) asparagine glycosylation sites follow: Asn427 and Asn464. The span at 481-499 (TEVESRKLTVDAYHNKPIG) shows a compositional bias: basic and acidic residues. Positions 500 to 510 (DQDDNDCQDGY) are enriched in acidic residues.

Interacts with importin alpha. In terms of processing, phosphorylated in the cytosol and extracellular matrix and unphosphorylated in the nucleus. Phosphorylation is necessary for nucleocytoplasmic transport and may be catalyzed by a nuclear isoform of CK2 and can be augmented by calcium. Phosphorylated (in vitro) by FAM20C in the extracellular medium at sites within the S-x-E/pS motif. Expressed in fetal brain, bone and tooth particularly in odontoblast, but not in ameloblast. Not expressed in liver and skin.

The protein resides in the nucleus. It is found in the cytoplasm. The protein localises to the secreted. Its subcellular location is the extracellular space. It localises to the extracellular matrix. Its function is as follows. May have a dual function during osteoblast differentiation. In the nucleus of undifferentiated osteoblasts, unphosphorylated form acts as a transcriptional component for activation of osteoblast-specific genes like osteocalcin. During the osteoblast to osteocyte transition phase it is phosphorylated and exported into the extracellular matrix, where it regulates nucleation of hydroxyapatite. The protein is Dentin matrix acidic phosphoprotein 1 (DMP1) of Bos taurus (Bovine).